Reading from the N-terminus, the 88-residue chain is Small ribosomal subunit protein uS17 (88 aa).

The protein belongs to the universal ribosomal protein uS17 family. In terms of assembly, part of the 30S ribosomal subunit.

Its function is as follows. One of the primary rRNA binding proteins, it binds specifically to the 5'-end of 16S ribosomal RNA. This Nitratidesulfovibrio vulgaris (strain ATCC 29579 / DSM 644 / CCUG 34227 / NCIMB 8303 / VKM B-1760 / Hildenborough) (Desulfovibrio vulgaris) protein is Small ribosomal subunit protein uS17.